A 318-amino-acid chain; its full sequence is Mitochondrial thiamine pyrophosphate carrier 1 (318 aa).

A run of 6 helical transmembrane segments spans residues 12 to 28 (GTRR…GLVS), 91 to 107 (LMYV…YRTT), 125 to 141 (SFVA…ASTY), 181 to 197 (GCSA…GLFF), 221 to 237 (AAGV…VFPL), and 284 to 301 (GLTV…VTMW). Solcar repeat units follow at residues 12 to 110 (GTRR…TTQA), 120 to 206 (PPPA…LRPV), and 214 to 309 (PFGS…SLHY).

The protein belongs to the mitochondrial carrier (TC 2.A.29) family.

The protein localises to the mitochondrion inner membrane. Functionally, mitochondrial transporter that mediates uptake of thiamine pyrophosphate (ThPP) into mitochondria. This Aspergillus oryzae (strain ATCC 42149 / RIB 40) (Yellow koji mold) protein is Mitochondrial thiamine pyrophosphate carrier 1 (tpc1).